The sequence spans 100 residues: ATP-dependent Clp protease adapter protein ClpS (100 aa).

It belongs to the ClpS family. As to quaternary structure, binds to the N-terminal domain of the chaperone ClpA.

Functionally, involved in the modulation of the specificity of the ClpAP-mediated ATP-dependent protein degradation. The sequence is that of ATP-dependent Clp protease adapter protein ClpS from Nitratidesulfovibrio vulgaris (strain DSM 19637 / Miyazaki F) (Desulfovibrio vulgaris).